Consider the following 137-residue polypeptide: Gonadotropin subunit beta-2 (137 aa).

Residues Met1 to Ala24 form the signal peptide. Disulfide bonds link Cys30–Cys76, Cys44–Cys91, Cys47–Cys129, Cys55–Cys107, Cys59–Cys109, and Cys112–Cys119. N-linked (GlcNAc...) asparagine glycosylation occurs at Asn34.

It belongs to the glycoprotein hormones subunit beta family. Heterodimer of an alpha and a beta chain.

Its subcellular location is the secreted. Its function is as follows. Involved in gametogenesis and steroidogenesis. The protein is Gonadotropin subunit beta-2 (cgbb) of Acanthopagrus latus (Yellowfin seabream).